The following is a 359-amino-acid chain: MTDETTEILVAGANPYPVVIGRGLRFDLARHLGSAVSKVLVVHPPTLGAAAAELRESLAGQYEVLLTEVPDAEAAKRIEVASFLWCIMGQADFTRSDAVVGLGGGAVTDLAGFAAATWLRGVRLVQAPTTLLGMVDAAVGGKTGINTAEGKNLVGAFYAPAAVVCDLDMLISLGRNELLAGFAEVVKYGFIAEPEILDIIERDVDAATDPESAEFRRVVELSIGIKARVVGEDFTEQGLREILNYGHTLGHAIEHAERYQWRHGAAIAVGMVFAAELGRLSGRLSDDAVERHRRILASLTLPTSYPLGRWQTLLAAMQRDKKARGSLLRFIVLDDVARPTVLAGPDQSLLFAAYQEIAS.

Residues 71 to 76, 105 to 109, 129 to 130, Lys-142, and Lys-151 each bind NAD(+); these read DAEAAK, GAVTD, and TT. 3 residues coordinate Zn(2+): Glu-184, His-247, and His-263.

Belongs to the sugar phosphate cyclases superfamily. Dehydroquinate synthase family. The cofactor is NAD(+). Requires Co(2+) as cofactor. It depends on Zn(2+) as a cofactor.

The protein resides in the cytoplasm. The catalysed reaction is 7-phospho-2-dehydro-3-deoxy-D-arabino-heptonate = 3-dehydroquinate + phosphate. The protein operates within metabolic intermediate biosynthesis; chorismate biosynthesis; chorismate from D-erythrose 4-phosphate and phosphoenolpyruvate: step 2/7. Its function is as follows. Catalyzes the conversion of 3-deoxy-D-arabino-heptulosonate 7-phosphate (DAHP) to dehydroquinate (DHQ). The protein is 3-dehydroquinate synthase of Leifsonia xyli subsp. xyli (strain CTCB07).